The primary structure comprises 341 residues: MKALSKLKAEKGIWLVDAPKPEMGHNDLLIKIKKTAICGTDMHIYNWDEWSQKTIPVPMVVGHEYVGEVVDIGQEVRGFKIGDRVSGEGHITCGHCRNCRAGRTHLCRNTSGVGVNREGSFAEYLVIPAFNAFKIPDDISDDLASIFDPFGNAVHTALSFDLVGEDVLITGAGPIGIMAAAVCRHVGARHVVITDVNEYRLELARKMGATRAVNVAQESLKDVMKELGMTEGFDVGLEMSGVPSAFHAMLDTMNHGGKIAMLGIPGGEMAIDWSKVIFKGLVIKGIYGREMFETWYKMASLIQSGLDISPIITHHYKIDDFQKGFDAMGSGQSGKVILSWD.

Cys-38 contributes to the Zn(2+) binding site. Catalysis depends on charge relay system residues Thr-40 and His-43. Zn(2+) contacts are provided by His-63, Glu-64, Cys-93, Cys-96, Cys-99, and Cys-107. NAD(+) is bound by residues Ile-175, Asp-195, Arg-200, 262–264 (LGI), and 286–287 (IY).

It belongs to the zinc-containing alcohol dehydrogenase family. Homotetramer. Zn(2+) serves as cofactor.

The protein resides in the cytoplasm. It carries out the reaction L-threonine + NAD(+) = (2S)-2-amino-3-oxobutanoate + NADH + H(+). Its pathway is amino-acid degradation; L-threonine degradation via oxydo-reductase pathway; glycine from L-threonine: step 1/2. In terms of biological role, catalyzes the NAD(+)-dependent oxidation of L-threonine to 2-amino-3-ketobutyrate. The protein is L-threonine 3-dehydrogenase of Shewanella sp. (strain ANA-3).